A 375-amino-acid polypeptide reads, in one-letter code: 4,4'-diaponeurosporenoate glycosyltransferase (375 aa).

4 helical membrane passes run 3–23 (WLSR…ALIF), 164–184 (FYEG…NVFS), 277–297 (IMAA…GLCL), and 330–350 (FSNL…KIFI).

The protein belongs to the glycosyltransferase 2 family. CrtQ subfamily.

The protein resides in the cell membrane. The protein operates within carotenoid biosynthesis; staphyloxanthin biosynthesis; staphyloxanthin from farnesyl diphosphate: step 4/5. Its function is as follows. Catalyzes the glycosylation of 4,4'-diaponeurosporenoate, i.e. the esterification of glucose at the C1'' position with the carboxyl group of 4,4'-diaponeurosporenic acid, to form glycosyl-4,4'-diaponeurosporenoate. This is a step in the biosynthesis of staphyloxanthin, an orange pigment present in most staphylococci strains. This chain is 4,4'-diaponeurosporenoate glycosyltransferase (crtQ), found in Staphylococcus aureus (strain MRSA252).